The sequence spans 504 residues: MVAPGSVTSRLGSVFPFLLVLVDLQYEGAECGVNADVEKHLELGKKLLAAGQLADALSQFHAAVDGDPDNYIAYYRRATVFLAMGKSKAALPDLTKVIQLKMDFTAARLQRGHLLLKQGKLDEAEDDFKKVLKSNPSENEEKEAQSQLIKSDEMQRLRSQALNAFGSGDYTAAIAFLDKILEVCVWDAELRELRAECFIKEGEPRKAISDLKAASKLKNDNTEAFYKISTLYYQLGDHELSLSEVRECLKLDQDHKRCFAHYKQVKKLNKLIESAEELIRDGRYTDATSKYESVMKTEPSIAEYTVRSKERICHCFSKDEKPVEAIRVCSEVLQMEPDNVNALKDRAEAYLIEEMYDEAIQDYETAQEHNENDQQIREGLEKAQRLLKQSQKRDYYKILGVKRNAKKQEIIKAYRKLALQWHPDNFQNEEEKKKAEKKFIDIAAAKEVLSDPEMRKKFDDGEDPLDAESQQGGGGNPFHRSWNSWQGFNPFSSGGPFRFKFHFN.

Positions 1–31 (MVAPGSVTSRLGSVFPFLLVLVDLQYEGAEC) are cleaved as a signal peptide. 9 TPR repeats span residues 37–70 (VEKH…DPDN), 72–104 (IAYY…KMDF), 105–138 (TAAR…NPSE), 154–187 (MQRL…CVWD), 189–221 (ELRE…KNDN), 222–255 (TEAF…DQDH), 268–301 (LNKL…EPSI), 306–339 (VRSK…EPDN), and 340–373 (VNAL…NEND). A disulfide bridge links C248 with C258. Phosphoserine; by FAM20C is present on S274. C313 and C329 are disulfide-bonded. The interval 375-393 (QIREGLEKAQRLLKQSQKR) is flexible linker. The 69-residue stretch at 394-462 (DYYKILGVKR…EMRKKFDDGE (69 aa)) folds into the J domain. A disordered region spans residues 451–481 (DPEMRKKFDDGEDPLDAESQQGGGGNPFHRS).

In terms of assembly, interacts with EIF2AK4/GCN2; this interaction occurs under endoplasmic reticulum (ER) stress, hypothermic and amino acid starving stress conditions and inhibits EIF2AK4/GCN2 kinase activity. Interacts with EIF2AK3. Interacts with EIF2AK2. Forms a trimeric complex with DNAJB1 and HSPA8. Interacts with THAP12. As to expression, widely expressed with high level in the pancreas and testis. Also expressed in cell lines with different levels.

The protein resides in the endoplasmic reticulum. In terms of biological role, involved in the unfolded protein response (UPR) during endoplasmic reticulum (ER) stress. Acts as a negative regulator of the EIF2AK4/GCN2 kinase activity by preventing the phosphorylation of eIF-2-alpha at 'Ser-52' and hence attenuating general protein synthesis under ER stress, hypothermic and amino acid starving stress conditions. Co-chaperone of HSPA8/HSC70, it stimulates its ATPase activity. May inhibit both the autophosphorylation of EIF2AK2/PKR and the ability of EIF2AK2 to catalyze phosphorylation of the EIF2A. May inhibit EIF2AK3/PERK activity. The sequence is that of DnaJ homolog subfamily C member 3 (DNAJC3) from Homo sapiens (Human).